Here is a 629-residue protein sequence, read N- to C-terminus: Probable potassium transport system protein Kup 3 (629 aa).

Helical transmembrane passes span 20–40 (LSLSALGIVYGDIGTSPLYTF), 54–74 (VTTIMGSASLIIWTLIIIASV), 106–126 (PFIIAVGLMGAALIYGDGTIT), 143–163 (PSLKYYVLPIAITILITLFAI), 171–191 (IGKAFGPVMAFWFLTIGILGA), 212–232 (FLFSNGATGFFILCGVFLCVT), 253–273 (WFGLAFPSLIFNYLGQAALVL), 291–311 (FLLPLIILSTVATIIASQAII), 343–363 (IYIGVVNWLLMLATLGLIIGF), 372–392 (AYGIAVSATMLCTSVLLFIAL), 400–420 (IIKSGLVAGLFMIVDASFFAA), and 425–445 (FINGGYIPITLAIIIYSMMYI).

Belongs to the HAK/KUP transporter (TC 2.A.72) family.

It localises to the cell inner membrane. It catalyses the reaction K(+)(in) + H(+)(in) = K(+)(out) + H(+)(out). Transport of potassium into the cell. Likely operates as a K(+):H(+) symporter. The chain is Probable potassium transport system protein Kup 3 from Legionella pneumophila (strain Corby).